A 280-amino-acid chain; its full sequence is Bifunctional protein FolD (280 aa).

Residues 161-163, S186, and I227 each bind NADP(+); that span reads GRS.

It belongs to the tetrahydrofolate dehydrogenase/cyclohydrolase family. In terms of assembly, homodimer.

It catalyses the reaction (6R)-5,10-methylene-5,6,7,8-tetrahydrofolate + NADP(+) = (6R)-5,10-methenyltetrahydrofolate + NADPH. The enzyme catalyses (6R)-5,10-methenyltetrahydrofolate + H2O = (6R)-10-formyltetrahydrofolate + H(+). The protein operates within one-carbon metabolism; tetrahydrofolate interconversion. Catalyzes the oxidation of 5,10-methylenetetrahydrofolate to 5,10-methenyltetrahydrofolate and then the hydrolysis of 5,10-methenyltetrahydrofolate to 10-formyltetrahydrofolate. This Caldanaerobacter subterraneus subsp. tengcongensis (strain DSM 15242 / JCM 11007 / NBRC 100824 / MB4) (Thermoanaerobacter tengcongensis) protein is Bifunctional protein FolD.